The chain runs to 586 residues: Aspartate--tRNA(Asp/Asn) ligase (586 aa).

An L-aspartate-binding site is contributed by E172. The segment at 196–199 is aspartate; the sequence is QLYK. R218 serves as a coordination point for L-aspartate. ATP contacts are provided by residues 218–220 and Q227; that span reads RDE. H446 serves as a coordination point for L-aspartate. E480 contributes to the ATP binding site. R487 contributes to the L-aspartate binding site. 532–535 lines the ATP pocket; sequence GIDR.

It belongs to the class-II aminoacyl-tRNA synthetase family. Type 1 subfamily. Homodimer.

It localises to the cytoplasm. It carries out the reaction tRNA(Asx) + L-aspartate + ATP = L-aspartyl-tRNA(Asx) + AMP + diphosphate. In terms of biological role, aspartyl-tRNA synthetase with relaxed tRNA specificity since it is able to aspartylate not only its cognate tRNA(Asp) but also tRNA(Asn). Reaction proceeds in two steps: L-aspartate is first activated by ATP to form Asp-AMP and then transferred to the acceptor end of tRNA(Asp/Asn). The sequence is that of Aspartate--tRNA(Asp/Asn) ligase from Borreliella burgdorferi (strain ATCC 35210 / DSM 4680 / CIP 102532 / B31) (Borrelia burgdorferi).